We begin with the raw amino-acid sequence, 156 residues long: Small ribosomal subunit protein uS7c (156 aa).

This sequence belongs to the universal ribosomal protein uS7 family. Part of the 30S ribosomal subunit.

It localises to the plastid. The protein localises to the chloroplast. One of the primary rRNA binding proteins, it binds directly to 16S rRNA where it nucleates assembly of the head domain of the 30S subunit. This chain is Small ribosomal subunit protein uS7c (rps7), found in Stangeria eriopus (Natal grass cycad).